We begin with the raw amino-acid sequence, 467 residues long: Argininosuccinate lyase (467 aa).

The protein belongs to the lyase 1 family. Argininosuccinate lyase subfamily.

Its subcellular location is the cytoplasm. The catalysed reaction is 2-(N(omega)-L-arginino)succinate = fumarate + L-arginine. It functions in the pathway amino-acid biosynthesis; L-arginine biosynthesis; L-arginine from L-ornithine and carbamoyl phosphate: step 3/3. This Allorhizobium ampelinum (strain ATCC BAA-846 / DSM 112012 / S4) (Agrobacterium vitis (strain S4)) protein is Argininosuccinate lyase.